Here is a 545-residue protein sequence, read N- to C-terminus: Glutamyl-tRNA(Gln) amidotransferase subunit B-1, chloroplastic/mitochondrial (545 aa).

The protein belongs to the GatB/GatE family. GatB subfamily. In terms of assembly, subunit of the heterotrimeric GatCAB amidotransferase (AdT) complex, composed of A, B and C subunits.

It localises to the mitochondrion. It is found in the plastid. Its subcellular location is the chloroplast. It carries out the reaction L-glutamyl-tRNA(Gln) + L-glutamine + ATP + H2O = L-glutaminyl-tRNA(Gln) + L-glutamate + ADP + phosphate + H(+). Allows the formation of correctly charged Gln-tRNA(Gln) through the transamidation of misacylated Glu-tRNA(Gln) in chloroplasts and mitochondria. The reaction takes place in the presence of glutamine and ATP through an activated gamma-phospho-Glu-tRNA(Gln). The sequence is that of Glutamyl-tRNA(Gln) amidotransferase subunit B-1, chloroplastic/mitochondrial from Micromonas pusilla (strain CCMP1545) (Picoplanktonic green alga).